Here is a 272-residue protein sequence, read N- to C-terminus: Phosphoglycolate phosphatase (272 aa).

The active-site Nucleophile is the D19. Mg(2+) contacts are provided by D19, D21, and D182.

Belongs to the HAD-like hydrolase superfamily. CbbY/CbbZ/Gph/YieH family. Requires Mg(2+) as cofactor.

The catalysed reaction is 2-phosphoglycolate + H2O = glycolate + phosphate. Its pathway is organic acid metabolism; glycolate biosynthesis; glycolate from 2-phosphoglycolate: step 1/1. Its function is as follows. Specifically catalyzes the dephosphorylation of 2-phosphoglycolate. Is involved in the dissimilation of the intracellular 2-phosphoglycolate formed during the DNA repair of 3'-phosphoglycolate ends, a major class of DNA lesions induced by oxidative stress. The sequence is that of Phosphoglycolate phosphatase from Pseudomonas syringae pv. tomato (strain ATCC BAA-871 / DC3000).